Here is a 106-residue protein sequence, read N- to C-terminus: UPF0060 membrane protein RHE_CH01408 (106 aa).

The next 4 membrane-spanning stretches (helical) occupy residues 4–24 (IIYA…WAWL), 30–50 (AWWL…LTLV), 59–79 (FAAY…LIEG), and 86–106 (DIGG…APRA).

This sequence belongs to the UPF0060 family.

It localises to the cell inner membrane. The polypeptide is UPF0060 membrane protein RHE_CH01408 (Rhizobium etli (strain ATCC 51251 / DSM 11541 / JCM 21823 / NBRC 15573 / CFN 42)).